A 194-amino-acid chain; its full sequence is Leucyl/phenylalanyl-tRNA--protein transferase (194 aa).

It belongs to the L/F-transferase family.

Its subcellular location is the cytoplasm. The catalysed reaction is N-terminal L-lysyl-[protein] + L-leucyl-tRNA(Leu) = N-terminal L-leucyl-L-lysyl-[protein] + tRNA(Leu) + H(+). It catalyses the reaction N-terminal L-arginyl-[protein] + L-leucyl-tRNA(Leu) = N-terminal L-leucyl-L-arginyl-[protein] + tRNA(Leu) + H(+). The enzyme catalyses L-phenylalanyl-tRNA(Phe) + an N-terminal L-alpha-aminoacyl-[protein] = an N-terminal L-phenylalanyl-L-alpha-aminoacyl-[protein] + tRNA(Phe). Functionally, functions in the N-end rule pathway of protein degradation where it conjugates Leu, Phe and, less efficiently, Met from aminoacyl-tRNAs to the N-termini of proteins containing an N-terminal arginine or lysine. The sequence is that of Leucyl/phenylalanyl-tRNA--protein transferase from Chlorobium phaeobacteroides (strain DSM 266 / SMG 266 / 2430).